Consider the following 373-residue polypeptide: MTKQFDIVVFPGDYGGPEVMAEGIKVLKAIERKHQSDVSFNLKYHLIGGASFDIHDTPITTEALEDAKAASAVLLGAVGGPKWDGTPVPVESGLGRLRKFLDAFGNIRPVNFIAPSLVNCSSFKEHVVSGTDITIVRELTGGIYFGARQEHDGSFNSASDLDHYDRDSIVRAARLAGKLAMSRQPHLPVTSLDKANLLAACGRLWRGVVKEVFETEFPTIKLSHMLIDTAAMNVARRPTSLNGIILTSNMFGDIISDEASAIPGSLGLLPSASLCAIPTVLDASKVRGIYEPIHGSAPDIAGQGIINPTGMILSVAMMLRYSLAMPEAADSIEAAVGKVIEDDCRTSDIGGRASTADFGDAVVIALRNCLDKN.

Residues Ser-92, Arg-98, and Arg-108 each contribute to the substrate site. Residues Asp-228, Asp-253, and Asp-257 each coordinate Mg(2+). NADP(+) contacts are provided by residues 294 to 300 (HGSAPDI) and Asn-307.

The protein belongs to the isocitrate and isopropylmalate dehydrogenases family. In terms of assembly, homodimer. Mg(2+) serves as cofactor. It depends on Mn(2+) as a cofactor.

It catalyses the reaction (2R,3S)-3-isopropylmalate + NAD(+) = 4-methyl-2-oxopentanoate + CO2 + NADH. Its pathway is mycotoxin biosynthesis. Its function is as follows. 3-isopropylmalate dehydrogenase; part of the gene cluster that mediates the biosynthesis of pneumocandins, lipohexapeptides of the echinocandin family that prevent fungal cell wall formation by non-competitive inhibition of beta-1,3-glucan synthase. The 10,12-dimethylmyristoyl side chain is synthesized by the reducing polyketide synthase gloL/GLPKS4. The thioesterase gloN/GLHYD exclusively interacts with gloL/GLPKS4 to maintain turnover of the polyketide side chain. The 10R,12S-dimethylmyristic acid is then transferred to the first thiolation domain of the nonribosomal peptide synthetase gloA/GLNRPS4 by the acyl-AMP ligase gloD/GLligase, followed by its acylation to L-ornithine to trigger elongation of the cyclic hexapeptide. L-ornithine, 4R-hydroxyl-L-proline (generated from L-proline by the dioxygenase gloF/GLOXY2), 3S-hydroxyl-L-homotyrosine (generated by gloG/GLHtyB, gloH/GLHtyA, gloI/GLHtyC, gloJ/GLHtyD and hydroxylated at C-3 by the dioxygenase gloM/GLOXY1), 3R-hydroxyl-L-glutamine (generated from L-glutamine probably by the dioxygenase gloE/GLOXY3) and 3S-hydroxyl-L-proline (generated from L-proline by the dioxygenase gloF/GLOXY2 to yield pneumocandin B0), or 3S-hydroxyl-4S-methyl-L-proline (generated from L-leucine by the dioxygenase gloC/GLOXY4 to yield pneumocandin A0) are sequentially added to the growing chain. The last C domain of gloA/GLNRPS4 is proposed to be responsible for cyclization by condensation to form the peptide bond between L-ornithine and 3S-hydroxyl-4S-methyl-L-proline (for pneumocandin A0) or 3S-hydroxyl-L-proline (for pneumocandin B0). Finally, the subsequent C-4 hydroxylation of 3S-hydroxyl-L-homotyrosine and L-ornithine dihydroxylation at C-4 and C-5 are performed by the cytochrome P450 monooxygenases gloP/GLP450-1 and gloO/GLP450-2, respectively. The protein is 3-isopropylmalate dehydrogenase gloI of Glarea lozoyensis (strain ATCC 20868 / MF5171).